The following is a 155-amino-acid chain: Transcription antitermination protein NusB (155 aa).

The protein belongs to the NusB family.

Functionally, involved in transcription antitermination. Required for transcription of ribosomal RNA (rRNA) genes. Binds specifically to the boxA antiterminator sequence of the ribosomal RNA (rrn) operons. This chain is Transcription antitermination protein NusB, found in Vibrio atlanticus (strain LGP32) (Vibrio splendidus (strain Mel32)).